Reading from the N-terminus, the 354-residue chain is 5,10-methenyltetrahydromethanopterin hydrogenase (354 aa).

Belongs to the HMD family.

It carries out the reaction 5,10-methenyl-5,6,7,8-tetrahydromethanopterin + H2 = 5,10-methylenetetrahydromethanopterin + H(+). It participates in one-carbon metabolism; methanogenesis from CO(2); 5,10-methylene-5,6,7,8-tetrahydromethanopterin from 5,10-methenyl-5,6,7,8-tetrahydromethanopterin (hydrogen route): step 1/1. Functionally, catalyzes the reversible reduction of methenyl-H(4)MPT(+) to methylene-H(4)MPT. The polypeptide is 5,10-methenyltetrahydromethanopterin hydrogenase (Methanococcus maripaludis (strain C5 / ATCC BAA-1333)).